The chain runs to 20 residues: Succinate--CoA ligase [ADP-forming] subunit beta, mitochondrial (20 aa).

Residues 8-20 (SMELLQEAGVSIP) form the ATP-grasp domain.

Belongs to the succinate/malate CoA ligase beta subunit family. ATP-specific subunit beta subfamily. Heterodimer of an alpha and a beta subunit. The beta subunit determines specificity for ATP. Interacts with ALAS2.

Its subcellular location is the mitochondrion. The catalysed reaction is succinate + ATP + CoA = succinyl-CoA + ADP + phosphate. Its pathway is carbohydrate metabolism; tricarboxylic acid cycle; succinate from succinyl-CoA (ligase route): step 1/1. In terms of biological role, ATP-specific succinyl-CoA synthetase functions in the citric acid cycle (TCA), coupling the hydrolysis of succinyl-CoA to the synthesis of ATP and thus represents the only step of substrate-level phosphorylation in the TCA. The beta subunit provides nucleotide specificity of the enzyme and binds the substrate succinate, while the binding sites for coenzyme A and phosphate are found in the alpha subunit. The polypeptide is Succinate--CoA ligase [ADP-forming] subunit beta, mitochondrial (Canis lupus familiaris (Dog)).